Reading from the N-terminus, the 83-residue chain is MTVGDETAIFDFGNQMPKDIHETLEIVYSSLEEKGYNPINQIVGYLMSGDPAYIPRLNDARNLIKRHERDEIIEELVHAYLKK.

This sequence belongs to the UPF0297 family.

The sequence is that of UPF0297 protein LEUM_0557 from Leuconostoc mesenteroides subsp. mesenteroides (strain ATCC 8293 / DSM 20343 / BCRC 11652 / CCM 1803 / JCM 6124 / NCDO 523 / NBRC 100496 / NCIMB 8023 / NCTC 12954 / NRRL B-1118 / 37Y).